Consider the following 694-residue polypeptide: 4-alpha-glucanotransferase (694 aa).

It belongs to the disproportionating enzyme family.

Its subcellular location is the cytoplasm. It catalyses the reaction Transfers a segment of a (1-&gt;4)-alpha-D-glucan to a new position in an acceptor, which may be glucose or a (1-&gt;4)-alpha-D-glucan.. In Escherichia coli (strain K12), this protein is 4-alpha-glucanotransferase (malQ).